A 1262-amino-acid chain; its full sequence is Structural maintenance of chromosomes protein 1 (1262 aa).

Residues Ser-171–Ala-497 adopt a coiled-coil conformation. The region spanning Ser-524 to Ala-642 is the SMC hinge domain. The stretch at Lys-680 to Gln-937 forms a coiled coil. The disordered stretch occupies residues Glu-965 to Gln-994. Residues Thr-974–Glu-991 show a composition bias toward polar residues. Residues Asp-1017 to Arg-1086 adopt a coiled-coil conformation. The short motif at Leu-1148–Asp-1183 is the DA-box element.

The protein belongs to the SMC family. SMC1 subfamily. In terms of assembly, component of the cohesin complex, composed of the smc-1 and smc-3 heterodimer attached via their SMC hinge domain, scc-1 which links them, and scc-3. Interacts with smc-3, scc-1, scc-3 and tim-1.

Its subcellular location is the nucleus. It localises to the chromosome. Its function is as follows. Involved in chromosome cohesion during cell cycle and in DNA repair. Required for chromosome segregation during mitosis. Central component of cohesin complex. The cohesin complex is required for the cohesion of sister chromatids after DNA replication. The cohesin complex apparently forms a large proteinaceous ring within which sister chromatids can be trapped. At anaphase, the complex is cleaved and dissociates from chromatin, allowing sister chromatids to segregate. The sequence is that of Structural maintenance of chromosomes protein 1 from Caenorhabditis elegans.